Reading from the N-terminus, the 976-residue chain is Vacuolar membrane protease (976 aa).

Over methionine 1–lysine 15 the chain is Cytoplasmic. Residues threonine 16–aspartate 36 form a helical membrane-spanning segment. Residues histidine 37–leucine 359 lie on the Vacuolar side of the membrane. N-linked (GlcNAc...) asparagine glycans are attached at residues asparagine 96 and asparagine 121. The Zn(2+) site is built by histidine 156 and aspartate 168. Asparagine 189 is a glycosylation site (N-linked (GlcNAc...) asparagine). Glutamate 200 serves as the catalytic Proton acceptor. Residue glutamate 201 coordinates Zn(2+). Residues asparagine 212 and asparagine 217 are each glycosylated (N-linked (GlcNAc...) asparagine). Positions 226 and 300 each coordinate Zn(2+). The chain crosses the membrane as a helical span at residues phenylalanine 360–isoleucine 380. The Cytoplasmic segment spans residues serine 381–tryptophan 392. The chain crosses the membrane as a helical span at residues leucine 393–phenylalanine 412. At serine 413–tyrosine 428 the chain is on the vacuolar side. Residues phenylalanine 429–cysteine 449 form a helical membrane-spanning segment. Residues serine 450 to serine 461 lie on the Cytoplasmic side of the membrane. Residues leucine 462–leucine 482 form a helical membrane-spanning segment. Residues tyrosine 483–serine 496 are Vacuolar-facing. A helical transmembrane segment spans residues isoleucine 497–methionine 517. At arginine 518–tyrosine 627 the chain is on the cytoplasmic side. The interval arginine 528–glutamate 610 is disordered. Residues asparagine 549 to threonine 558 show a composition bias toward polar residues. A compositionally biased stretch (low complexity) spans serine 559–aspartate 570. Basic and acidic residues predominate over residues asparagine 582–proline 601. Residues alanine 628–valine 648 form a helical membrane-spanning segment. At aspartate 649–aspartate 668 the chain is on the vacuolar side. The N-linked (GlcNAc...) asparagine glycan is linked to asparagine 656. A helical transmembrane segment spans residues valine 669 to tyrosine 689. Topologically, residues lysine 690–asparagine 692 are cytoplasmic. A helical transmembrane segment spans residues tyrosine 693 to valine 713. The Vacuolar segment spans residues histidine 714–leucine 976. 5 N-linked (GlcNAc...) asparagine glycosylation sites follow: asparagine 768, asparagine 796, asparagine 811, asparagine 866, and asparagine 937.

It belongs to the peptidase M28 family. The cofactor is Zn(2+).

The protein resides in the vacuole membrane. May be involved in vacuolar sorting and osmoregulation. This Saccharomyces cerevisiae (strain AWRI1631) (Baker's yeast) protein is Vacuolar membrane protease.